A 203-amino-acid chain; its full sequence is Guanylate kinase (203 aa).

The Guanylate kinase-like domain maps to 3-181; that stretch reads GTLYIVAAPS…AVAEMCAIFT (179 aa). 10–17 contacts ATP; it reads APSGAGKS.

Belongs to the guanylate kinase family.

The protein localises to the cytoplasm. The catalysed reaction is GMP + ATP = GDP + ADP. Its function is as follows. Essential for recycling GMP and indirectly, cGMP. The protein is Guanylate kinase of Xanthomonas euvesicatoria pv. vesicatoria (strain 85-10) (Xanthomonas campestris pv. vesicatoria).